The chain runs to 89 residues: Sodium channel toxin To13 (89 aa).

The first 18 residues, methionine 1 to glycine 18, serve as a signal peptide directing secretion. The LCN-type CS-alpha/beta domain maps to lysine 20–lysine 87. Disulfide bonds link cysteine 30-cysteine 86, cysteine 34-cysteine 60, cysteine 45-cysteine 67, and cysteine 49-cysteine 69.

This sequence belongs to the long (4 C-C) scorpion toxin superfamily. Sodium channel inhibitor family. As to expression, expressed by the venom gland.

Its subcellular location is the secreted. Functionally, inhibits voltage-gated sodium channels (Nav). This is Sodium channel toxin To13 from Tityus obscurus (Amazonian scorpion).